Consider the following 529-residue polypeptide: 56 kDa type-specific antigen (529 aa).

An N-terminal signal peptide occupies residues 1–22 (MKKIMLIASAMSALSLPFSASA). Residues 67 to 87 (LTTSMPFGGTLAAGMTIAPGF) traverse the membrane as a helical segment. A compositionally biased stretch (basic and acidic residues) spans 106–116 (GKTGSDADIRS). Disordered regions lie at residues 106–134 (GKTG…PQPT) and 392–424 (DGGC…KGKE). A helical membrane pass occupies residues 477-492 (TGMVASGALGVAINAA).

The protein resides in the cell membrane. Its function is as follows. May be an adherent factor for rickettsial adsorption to the host-cell surface and a determinant of virulence of individual rickettsial strain. It is the major outer membrane protein. This is 56 kDa type-specific antigen from Orientia tsutsugamushi (Rickettsia tsutsugamushi).